Consider the following 81-residue polypeptide: Small ribosomal subunit protein bS16 (81 aa).

Belongs to the bacterial ribosomal protein bS16 family.

This Caldicellulosiruptor bescii (strain ATCC BAA-1888 / DSM 6725 / KCTC 15123 / Z-1320) (Anaerocellum thermophilum) protein is Small ribosomal subunit protein bS16.